The sequence spans 581 residues: Arginine--tRNA ligase (581 aa).

The short motif at 126–136 (PNLAKEMHVGH) is the 'HIGH' region element.

It belongs to the class-I aminoacyl-tRNA synthetase family. As to quaternary structure, monomer.

The protein localises to the cytoplasm. The catalysed reaction is tRNA(Arg) + L-arginine + ATP = L-arginyl-tRNA(Arg) + AMP + diphosphate. The protein is Arginine--tRNA ligase of Shewanella pealeana (strain ATCC 700345 / ANG-SQ1).